The primary structure comprises 246 residues: Large ribosomal subunit protein uL30 (246 aa).

It belongs to the universal ribosomal protein uL30 family.

Its function is as follows. Binds to G-rich structures in 28S rRNA and in mRNAs. Plays a regulatory role in the translation apparatus; inhibits cell-free translation of mRNAs. This Dictyostelium discoideum (Social amoeba) protein is Large ribosomal subunit protein uL30 (rpl7).